Here is a 233-residue protein sequence, read N- to C-terminus: Demethylmenaquinone methyltransferase (233 aa).

S-adenosyl-L-methionine is bound by residues Thr58, Asp79, and 106-107 (NA).

This sequence belongs to the class I-like SAM-binding methyltransferase superfamily. MenG/UbiE family.

The enzyme catalyses a 2-demethylmenaquinol + S-adenosyl-L-methionine = a menaquinol + S-adenosyl-L-homocysteine + H(+). The protein operates within quinol/quinone metabolism; menaquinone biosynthesis; menaquinol from 1,4-dihydroxy-2-naphthoate: step 2/2. Its function is as follows. Methyltransferase required for the conversion of demethylmenaquinol (DMKH2) to menaquinol (MKH2). In Bacillus velezensis (strain DSM 23117 / BGSC 10A6 / LMG 26770 / FZB42) (Bacillus amyloliquefaciens subsp. plantarum), this protein is Demethylmenaquinone methyltransferase.